The chain runs to 446 residues: D(3) dopamine receptor (446 aa).

Residues 1 to 32 lie on the Extracellular side of the membrane; it reads MAPLSQISSHINSTCGAENSTGVNRARPHAYY. N-linked (GlcNAc...) asparagine glycans are attached at residues N12 and N19. The chain crosses the membrane as a helical span at residues 33 to 55; it reads ALSYCALILAIIFGNGLVCAAVL. The Cytoplasmic portion of the chain corresponds to 56-65; the sequence is RERALQTTTN. The helical transmembrane segment at 66–88 threads the bilayer; the sequence is YLVVSLAVADLLVATLVMPWVVY. Residues 89–104 are Extracellular-facing; sequence LEVTGGVWNFSRICCD. An N-linked (GlcNAc...) asparagine glycan is attached at N97. A disulfide bridge links C103 with C181. Residues 105–126 form a helical membrane-spanning segment; it reads VFVTLDVMMCTASILNLCAISI. Over 127 to 149 the chain is Cytoplasmic; it reads DRYTAVVMPVHYQHGTGQSSCRR. The helical transmembrane segment at 150–170 threads the bilayer; it reads VALMITAVWVLAFAVSCPLLF. The Extracellular segment spans residues 171–187; the sequence is GFNTTGDPSICSISNPD. A glycan (N-linked (GlcNAc...) asparagine) is linked at N173. Residues 188–209 traverse the membrane as a helical segment; it reads FVIYSSVVSFYVPFGVTVLVYA. At 210–375 the chain is on the cytoplasmic side; sequence RIYMVLRQRR…VPLREKKATQ (166 aa). The chain crosses the membrane as a helical span at residues 376-397; sequence MVVIVLGAFIVCWLPFFLTHVL. Topologically, residues 398–412 are extracellular; sequence NTHCQACHVSPELYR. The cysteines at positions 401 and 404 are disulfide-linked. A helical transmembrane segment spans residues 413–432; that stretch reads ATTWLGYVNSALNPVIYTTF. The Cytoplasmic portion of the chain corresponds to 433 to 446; the sequence is NIEFRKAFLKILSC.

It belongs to the G-protein coupled receptor 1 family. In terms of assembly, interacts with CLIC6. Interacts with GRK4. Interacts with PALM. Interacts with FLNA (via filamin repeat 21); increases PKA-mediated phosphorylation of FLNA. Post-translationally, phosphorylated by GRK4. Palmitoylated.

The protein resides in the cell membrane. Functionally, dopamine receptor whose activity is mediated by G proteins which inhibit adenylyl cyclase. Promotes cell proliferation. The sequence is that of D(3) dopamine receptor (Drd3) from Mus musculus (Mouse).